Consider the following 55-residue polypeptide: Protein CADMIUM TOLERANCE 2 (55 aa).

The chain crosses the membrane as a helical span at residues 24 to 40; it reads GCLYACIFTALCCFCCY.

This sequence belongs to the CYSTM1 family. As to expression, expressed only in roots.

Its subcellular location is the cell membrane. The protein localises to the secreted. It is found in the cell wall. Its function is as follows. Confers resistance to heavy metal ions (e.g. cadmium (CdCl(2)) and copper (CuCl(2))) by chelating them at the plasma membrane of root cells, thus stopping their entry and reducing their accumulation. The polypeptide is Protein CADMIUM TOLERANCE 2 (Oryza sativa subsp. japonica (Rice)).